The sequence spans 231 residues: MLEGIFDINHIFDENGIKTLKRFGWDGSVAVQNHNEYSEEKINNAVEYGENCEFKVFSGLKLSTKNQNEMEKAVKKYRNKVDILLVEGGEIKINRRVLEMNDVDILSTPELNRMDNGLDHILARLGSTNRVAIELNFGNLLKSRNYDRSKILWAFQRNLKLAKKYDTPVVISSGANDIYGIKAPGDLRGFLNTITDPLYSKKIIETPSKIVDYRLYLKKDNVLTLGIEVVE.

It belongs to the eukaryotic/archaeal RNase P protein component 3 family. As to quaternary structure, consists of a catalytic RNA component and at least 4-5 protein subunits.

It localises to the cytoplasm. The enzyme catalyses Endonucleolytic cleavage of RNA, removing 5'-extranucleotides from tRNA precursor.. In terms of biological role, part of ribonuclease P, a protein complex that generates mature tRNA molecules by cleaving their 5'-ends. The chain is Ribonuclease P protein component 3 from Methanococcus maripaludis (strain C5 / ATCC BAA-1333).